Here is a 341-residue protein sequence, read N- to C-terminus: 2-dehydro-3-deoxy-L-galactonate 5-dehydrogenase (341 aa).

C37 serves as a coordination point for Zn(2+). Residues T39 and H42 each act as charge relay system in the active site. Positions 60, 61, 90, 93, 96, and 104 each coordinate Zn(2+).

It belongs to the zinc-containing alcohol dehydrogenase family. It depends on Zn(2+) as a cofactor.

The enzyme catalyses 2-dehydro-3-deoxy-L-galactonate + NAD(+) = 3-deoxy-D-glycero-2,5-hexodiulosonate + NADH + H(+). Its function is as follows. Involved in the degradation of 3,6-anhydro-L-galactose, which is the major monomeric sugar of red macroalgae. Catalyzes the third step of the pathway, the NAD(+)-dependent oxidation of 2-dehydro-3-deoxy-L-galactonate (L-KDGal) to 3-deoxy-D-glycero-2,5-hexodiulosonate (L-DDGal). This Pseudoalteromonas atlantica (strain T6c / ATCC BAA-1087) protein is 2-dehydro-3-deoxy-L-galactonate 5-dehydrogenase.